The primary structure comprises 852 residues: MKDFLEDYKKSVLERKSEGIPPLPLNAKQVEAVVEILMKDPTNAAFAKELLIHRVSPGVDEGAKVKAEFLAQLSQKKLECPHISALEATTLLGTMLGGYNVEPLIVGLESQDKNIAKESAKALKTTLLVYGSFDKIAAMSKTNALAKEVLESWANAEWFLNKEPLNECIEACVFKIDGETNTDDLSPASDAFTRSDIPLHAKAMLKNRIENYEQRIEAIKTKGVPVAYVGDVVGTGSSRKSATNSIMWHFGKDIPFVPNKRSGGIVIGGVIAPIFFATCEDSGALPIVADVKDLKEGDIIKIYPYKGEITLNDKVVSTFKLEPETLLDEVRASGRIPLIIGRGLTNKARKFLGLGESEAFKKPSAPKSDAKGYTLAQKIVGHACGVKGILPGAYCEPKVTTVGSQDTTGAMTRDEVKELASLKFDAPFVLQSFCHTAAYPKPSDVSLHATLPGFITQRGGVALHPGDGVIHTWLNRMGLPDTLGTGGDSHTRFPLGISFPAGSGLVAFAAVTGTMPLNMPESVLVRFKGEMNPGITLRDLVNAIPYYAIKKGLLTVEKKGKINVFNGRILEIEGLPDIKMEQAFELSDASAERSAAACVVRLNKEPMIEYLKSNIKLIDEMIASGYEDKETLKKRRDAMQAWVDKPVLLEPDSNAQYAAVIEIDVAEITEPILACPNDPDDVATLSEVLADTTGKRPHAIDEVFIGSCMTNIGHFRAFGEIVKNAPPSQARLWVVPPSKMDEQELINEGYYAIFGAAGARTEVPGCSLCMGNQARVRDNAVVFSTSTRNFDNRMGRGAKVYLGSAELGAACALLGRIPTKEEYMNLVSEKLESQKDKIYRYMNFNLMENFRL.

Substrate is bound by residues R194, 237-239 (SSR), 405-407 (QDT), and S489. [4Fe-4S] cluster-binding residues include C708, C766, and C769. Positions 788 and 793 each coordinate substrate.

This sequence belongs to the aconitase/IPM isomerase family. In terms of assembly, monomer. It depends on [4Fe-4S] cluster as a cofactor.

The enzyme catalyses citrate = D-threo-isocitrate. The catalysed reaction is (2S,3R)-3-hydroxybutane-1,2,3-tricarboxylate = 2-methyl-cis-aconitate + H2O. Its pathway is carbohydrate metabolism; tricarboxylic acid cycle; isocitrate from oxaloacetate: step 2/2. The protein operates within organic acid metabolism; propanoate degradation. Its function is as follows. Involved in the catabolism of short chain fatty acids (SCFA) via the tricarboxylic acid (TCA)(acetyl degradation route) and probably via the 2-methylcitrate cycle I (propionate degradation route). Catalyzes the reversible isomerization of citrate to isocitrate via cis-aconitate. Catalyzes the hydration of 2-methyl-cis-aconitate to yield (2R,3S)-2-methylisocitrate. The apo form of AcnB functions as a RNA-binding regulatory protein. In Helicobacter pylori (strain J99 / ATCC 700824) (Campylobacter pylori J99), this protein is Aconitate hydratase B (acnB).